A 193-amino-acid chain; its full sequence is Bifunctional protein PyrR (193 aa).

Residues 57 to 58 (TR), Arg98, 119 to 127 (DDVLYSGRS), Arg152, and Val176 contribute to the substrate site. The short motif at 115-127 (VILVDDVLYSGRS) is the PRPP-binding element.

This sequence belongs to the purine/pyrimidine phosphoribosyltransferase family. PyrR subfamily.

It carries out the reaction UMP + diphosphate = 5-phospho-alpha-D-ribose 1-diphosphate + uracil. Regulates the transcription of the pyrimidine nucleotide (pyr) operon in response to exogenous pyrimidines. In terms of biological role, also displays a weak uracil phosphoribosyltransferase activity which is not physiologically significant. The chain is Bifunctional protein PyrR from Mycobacterium bovis (strain ATCC BAA-935 / AF2122/97).